We begin with the raw amino-acid sequence, 443 residues long: Threonine/serine transporter TdcC (443 aa).

11 consecutive transmembrane segments (helical) span residues 22-42 (TTWT…FFPI), 44-64 (AGFG…PIAF), 97-117 (GVVI…IYGV), 140-160 (FVAL…KDLM), 163-183 (VMSY…LSLI), 207-227 (ILVT…FSPI), 259-279 (ASML…FTLS), 319-339 (ASII…LGTL), 366-386 (ISMI…PNIL), 389-409 (IEAM…MYAI), and 423-443 (DNVF…YKLF).

The protein belongs to the amino acid/polyamine transporter 2 family. SdaC/TdcC subfamily.

Its subcellular location is the cell inner membrane. The enzyme catalyses L-threonine(in) + H(+)(in) = L-threonine(out) + H(+)(out). It carries out the reaction L-serine(in) + H(+)(in) = L-serine(out) + H(+)(out). In terms of biological role, involved in the import of threonine and serine into the cell, with the concomitant import of a proton (symport system). This is Threonine/serine transporter TdcC from Salmonella paratyphi B (strain ATCC BAA-1250 / SPB7).